We begin with the raw amino-acid sequence, 141 residues long: Hemoglobin subunit alpha (141 aa).

A Globin domain is found at 1 to 141; that stretch reads VLSSDDKCNV…VSSVLTSKYR (141 aa). Residue His58 coordinates O2. His87 is a heme b binding site.

It belongs to the globin family. In terms of assembly, heterotetramer of two alpha chains and two beta chains. Red blood cells.

In terms of biological role, involved in oxygen transport from the lung to the various peripheral tissues. In Crocodylus niloticus (Nile crocodile), this protein is Hemoglobin subunit alpha (HBA).